The chain runs to 73 residues: UPF0435 protein lwe1727 (73 aa).

This sequence belongs to the UPF0435 family.

The chain is UPF0435 protein lwe1727 from Listeria welshimeri serovar 6b (strain ATCC 35897 / DSM 20650 / CCUG 15529 / CIP 8149 / NCTC 11857 / SLCC 5334 / V8).